An 815-amino-acid polypeptide reads, in one-letter code: MSNNVKLQVLLRAVDQASRPFKSIRTASKSLSGDIRETQKSLRELNGHASRIEGFRKTSAQLAVTGHALEKARQEAEALATQFKNTERPTRAQAKVLESAKRAAEDLQAKYNRLTDSVKRQQRELAAVGINTRNLAHDEQGLKNRISETTAQLNRQRDALVRVSAQQAKLNAVKQRYQAGKELAGNMASVGAAGVGIAAAGTMAGVKLLMPGYEFAQKNSELQAVIGVAKDSAEMAALRKQARQLGDNTAASADDAAGAQIIIAKAGGDVDAIQAATPVTLNMALANRRTMEENAALLMGMKSAFQLSNDKVAHIGDVLSMTMNKTAADFDGMSDALTYAAPVAKNAGVSIEETAAMVGALHDAKITGSMAGTGSRAVLSRLQAPTGKAWDALKELGVKTSDSKGNTRPIFTILKEMQASFEKNRLGTAQQAEYMKTIFGEEASSAAAVLMTAASTGKLDKLTAAFKASDGKTAELVNIMQDNLGGDFKAFQSAYEAVGTDLFDQQEGALRKLTQTATKYVLKLDGWIQKNKSLASTIGIIAGGALALTGIIGAIGLVAWPVITGINAIIAAAGAMGAVFTTVGSAVMTAIGAISWPVVAVVAAIVAGALLIRKYWEPVSAFFGGVVEGLKAAFAPVGELFTPLKPVFDWLGEKLQAAWQWFKNLIAPVKATQDTLNRCRDTGVMFGQALADALMLPLNAFNKLRSGIDWVLEKLGVINKESDTLDQTAARTHTATYGTGDYIPATSSYAGYQAYQPVTAPAGRSYVDQSKNEYHISLTGGTAPGTQLDRQLQDALEKYERDKRARARASMMHDG.

The stretch at 67 to 163 (HALEKARQEA…NRQRDALVRV (97 aa)) forms a coiled coil.

This sequence belongs to the P2likevirus tape measure protein family.

Serves as a base for tail tube protein polymerization and acts as a template for tail length determination. The polypeptide is Probable tape measure protein (Escherichia phage P2 (Bacteriophage P2)).